A 400-amino-acid chain; its full sequence is S-adenosylmethionine synthase (400 aa).

136–141 (GQGSVD) provides a ligand contact to ATP.

Belongs to the AdoMet synthase 2 family. It depends on Mg(2+) as a cofactor.

The enzyme catalyses L-methionine + ATP + H2O = S-adenosyl-L-methionine + phosphate + diphosphate. It functions in the pathway amino-acid biosynthesis; S-adenosyl-L-methionine biosynthesis; S-adenosyl-L-methionine from L-methionine: step 1/1. Functionally, catalyzes the formation of S-adenosylmethionine from methionine and ATP. The chain is S-adenosylmethionine synthase (mat) from Thermoplasma acidophilum (strain ATCC 25905 / DSM 1728 / JCM 9062 / NBRC 15155 / AMRC-C165).